A 213-amino-acid chain; its full sequence is MRLILIRHAQARCNILEDDALMDAYDPHCELTEAGIGQAVKLRDEYPVSLTPSVIYSSPLKRARETAGIFRGRYPSVPFVEDERLSELKAPESFIPPITQGQWDLYLEQRIRSPHLEIVKGLESLDVQRERIERFYKDLFRKYAEEACNIVIFTHAFSIQLSILFFLGLGNEQLLQWQIKASNTAMHIIHYDPTSGSFLLESLNNRSHLQTTG.

His-8 functions as the Tele-phosphohistidine intermediate in the catalytic mechanism. Residue His-155 is part of the active site.

It belongs to the histidine phosphatase superfamily.

The enzyme catalyses 5''-phosphoribostamycin + H2O = ribostamycin + phosphate. It functions in the pathway antibiotic biosynthesis; butirosin biosynthesis. Catalyzes dephosphorylation of 5''-phosphoribostamycin to generate ribostamycinin the biosynthetic pathway of butirosin. This chain is 5''-phosphoribostamycin phosphatase (btrP), found in Niallia circulans (Bacillus circulans).